Here is a 156-residue protein sequence, read N- to C-terminus: CASP-like protein 5C1 (156 aa).

Residues 1 to 21 (MENRERAGAGAVGSAGSLGLR) lie on the Cytoplasmic side of the membrane. A helical membrane pass occupies residues 22 to 42 (VGQAVFSSASLLFMSVGVEFF). The Extracellular segment spans residues 43–46 (SYTA). Residues 47-67 (FCFLVTIMGLVIPWSCTLAMI) traverse the membrane as a helical segment. Residues 68–81 (DVYSILVGCPLRVP) lie on the Cytoplasmic side of the membrane. The helical transmembrane segment at 82 to 102 (GVMVIVVIGDWVLAILSLAAA) threads the bilayer. Residues 103-132 (SSSAAVIDLLLQFHGSHCSPRFCGRYQLSA) lie on the Extracellular side of the membrane. The helical transmembrane segment at 133–153 (MMAFLSWFLTAASSLFNLWFI) threads the bilayer. Topologically, residues 154-156 (ASR) are cytoplasmic.

The protein belongs to the Casparian strip membrane proteins (CASP) family. In terms of assembly, homodimer and heterodimers.

It is found in the cell membrane. The protein is CASP-like protein 5C1 of Oryza sativa subsp. japonica (Rice).